Here is a 155-residue protein sequence, read N- to C-terminus: Ribosomal RNA large subunit methyltransferase H (155 aa).

S-adenosyl-L-methionine is bound by residues leucine 72, glycine 103, and 122-127; that span reads LGRMVW.

The protein belongs to the RNA methyltransferase RlmH family. As to quaternary structure, homodimer.

The protein resides in the cytoplasm. It carries out the reaction pseudouridine(1915) in 23S rRNA + S-adenosyl-L-methionine = N(3)-methylpseudouridine(1915) in 23S rRNA + S-adenosyl-L-homocysteine + H(+). Functionally, specifically methylates the pseudouridine at position 1915 (m3Psi1915) in 23S rRNA. This chain is Ribosomal RNA large subunit methyltransferase H, found in Cereibacter sphaeroides (strain KD131 / KCTC 12085) (Rhodobacter sphaeroides).